A 190-amino-acid polypeptide reads, in one-letter code: MFEKLKKSLIEAPVVKKGDYDYFVHPITDGVPLVVPEILEEVADGVSKFGNMNVDKIVCVEAMGIHIATALSLKTGIPFVVVRKRSYGLEGEVAVHQMTGYSEGELYINGLNSGDRIILVDDVVSTGGTMIAVLKALKAIKVDIVDVMAVIEKGKGKCIVEDATGVTVRSLVKLNVVNGKVVIKGSIDES.

Belongs to the purine/pyrimidine phosphoribosyltransferase family. Archaeal HPRT subfamily. In terms of assembly, homodimer.

Its subcellular location is the cytoplasm. It catalyses the reaction IMP + diphosphate = hypoxanthine + 5-phospho-alpha-D-ribose 1-diphosphate. The catalysed reaction is GMP + diphosphate = guanine + 5-phospho-alpha-D-ribose 1-diphosphate. Its pathway is purine metabolism; IMP biosynthesis via salvage pathway; IMP from hypoxanthine: step 1/1. In terms of biological role, catalyzes a salvage reaction resulting in the formation of IMP that is energically less costly than de novo synthesis. This is Hypoxanthine/guanine phosphoribosyltransferase from Methanobacterium paludis (strain DSM 25820 / JCM 18151 / SWAN1).